Here is a 194-residue protein sequence, read N- to C-terminus: Adenylate kinase (194 aa).

11–16 (GSGKGT) contacts ATP. The segment at 31-60 (STGELLRAEIKAQTELGQAAAGYINEGHLV) is NMP. Residues Thr-32, Arg-37, 58 to 60 (HLV), 86 to 89 (GFPR), and Gln-93 each bind AMP. Residues 127-137 (NRGKISGRSDD) are LID. Arg-128 is a binding site for ATP. AMP-binding residues include Arg-134 and Arg-145. Gly-173 lines the ATP pocket.

It belongs to the adenylate kinase family. As to quaternary structure, monomer.

Its subcellular location is the cytoplasm. It catalyses the reaction AMP + ATP = 2 ADP. The protein operates within purine metabolism; AMP biosynthesis via salvage pathway; AMP from ADP: step 1/1. Catalyzes the reversible transfer of the terminal phosphate group between ATP and AMP. Plays an important role in cellular energy homeostasis and in adenine nucleotide metabolism. This is Adenylate kinase from Porphyromonas gingivalis (strain ATCC 33277 / DSM 20709 / CIP 103683 / JCM 12257 / NCTC 11834 / 2561).